The sequence spans 806 residues: G-type lectin S-receptor-like serine/threonine-protein kinase At1g61430 (806 aa).

Positions 1–24 (MGKKRIVFFAYLPFFTIFMSFSFA) are cleaved as a signal peptide. A Bulb-type lectin domain is found at 25–144 (GITKESPFSI…VSGRTLWQSF (120 aa)). The Extracellular portion of the chain corresponds to 25–425 (GITKESPFSI…ELDVNKRKMT (401 aa)). N-linked (GlcNAc...) asparagine glycans are attached at residues Asn-53, Asn-94, Asn-117, and Asn-236. Residues 277–313 (PANSCDIYGVCGPFGLCVVSIPPKCKCFKGFVPKFAK) enclose the EGF-like domain. 2 disulfides stabilise this stretch: Cys-281/Cys-293 and Cys-287/Cys-301. N-linked (GlcNAc...) asparagine glycans are attached at residues Asn-319, Asn-335, and Asn-374. A PAN domain is found at 332–414 (CQGNSSGKDA…GELLSIRLAR (83 aa)). 2 cysteine pairs are disulfide-bonded: Cys-367–Cys-388 and Cys-371–Cys-377. The helical transmembrane segment at 426–446 (IVASTVSLTLFVIFGFAAFGF) threads the bilayer. Residues 447-806 (WRCRVEHNAH…EMTESVIQGR (360 aa)) lie on the Cytoplasmic side of the membrane. In terms of domain architecture, Protein kinase spans 489 to 777 (FSLSNKLGPG…DLPLPKKPTF (289 aa)). ATP-binding positions include 495–503 (LGPGGFGSV) and Lys-520. Residues Ser-526 and Ser-541 each carry the phosphoserine modification. The interval 581-598 (RKKLELDWPKRFEIIEGI) is caM-binding. Asp-617 serves as the catalytic Proton acceptor. A phosphoserine mark is found at Ser-621 and Ser-634. Phosphothreonine is present on Thr-651. Residues Ser-694, Ser-695, and Ser-788 each carry the phosphoserine modification.

The protein belongs to the protein kinase superfamily. Ser/Thr protein kinase family.

It localises to the cell membrane. The enzyme catalyses L-seryl-[protein] + ATP = O-phospho-L-seryl-[protein] + ADP + H(+). The catalysed reaction is L-threonyl-[protein] + ATP = O-phospho-L-threonyl-[protein] + ADP + H(+). The chain is G-type lectin S-receptor-like serine/threonine-protein kinase At1g61430 from Arabidopsis thaliana (Mouse-ear cress).